Consider the following 215-residue polypeptide: Adenylate kinase (215 aa).

Position 10–15 (10–15) interacts with ATP; it reads GAGKGT. Positions 30–59 are NMP; that stretch reads STGDMLRAAVKAGTPIGLKAKAVMEAGELV. Residues Thr31, Arg36, 57 to 59, 85 to 88, and Gln92 each bind AMP; these read ELV and GYPR. An LID region spans residues 126–163; that stretch reads GRYTCANCGEGYHDRFKQPKVAGVCDVCGSAEFKRRPD. Arg127 contributes to the ATP binding site. 4 residues coordinate Zn(2+): Cys130, Cys133, Cys150, and Cys153. AMP is bound by residues Arg160 and Arg172. Ala200 contacts ATP.

This sequence belongs to the adenylate kinase family. As to quaternary structure, monomer.

The protein resides in the cytoplasm. The enzyme catalyses AMP + ATP = 2 ADP. Its pathway is purine metabolism; AMP biosynthesis via salvage pathway; AMP from ADP: step 1/1. Functionally, catalyzes the reversible transfer of the terminal phosphate group between ATP and AMP. Plays an important role in cellular energy homeostasis and in adenine nucleotide metabolism. This chain is Adenylate kinase, found in Rhizorhabdus wittichii (strain DSM 6014 / CCUG 31198 / JCM 15750 / NBRC 105917 / EY 4224 / RW1) (Sphingomonas wittichii).